Reading from the N-terminus, the 91-residue chain is Long neurotoxin OH-56 (91 aa).

The N-terminal stretch at 1-21 (MKTLLLTLVVVTIMCLDLGYT) is a signal peptide. Intrachain disulfides connect Cys-24/Cys-42, Cys-35/Cys-63, Cys-48/Cys-52, Cys-67/Cys-78, and Cys-79/Cys-84.

This sequence belongs to the three-finger toxin family. Long-chain subfamily. Type II alpha-neurotoxin sub-subfamily. In terms of tissue distribution, expressed by the venom gland.

It is found in the secreted. Binds with high affinity to muscular (alpha-1/CHRNA1) and neuronal (alpha-7/CHRNA7) nicotinic acetylcholine receptor (nAChR) and inhibits acetylcholine from binding to the receptor, thereby impairing neuromuscular and neuronal transmission. The sequence is that of Long neurotoxin OH-56 from Ophiophagus hannah (King cobra).